Consider the following 56-residue polypeptide: ComX pheromone (56 aa).

Positions 1–50 (MMQDLINYFLSYPEVLKKLKNREACLIGFSSNETETIIKAYNDYHLSSPT) are excised as a propeptide. Tryptophan 54 carries the tryptophan derivative modification. Tryptophan 54 is lipidated: 3'-farnesyl-2',N2-cyclotryptophan.

In terms of assembly, interacts directly with the sensor histidine kinase ComP and stimulates its activity. In terms of processing, trp-54 is modified by farnesylation, which is essential for activity. Modified by the tryptophan prenyltransferase ComQ before export to the extracellular environment. The type of isoprenyl derivative differs among the different pherotypes and depends on ComX primary sequence.

The protein resides in the secreted. In terms of biological role, part of a major quorum-sensing system that regulates the development of genetic competence. Acts through the activation of the two-component regulatory system ComP/ComA composed of a sensor histidine kinase, ComP, and a response regulator, ComA. This Bacillus mojavensis protein is ComX pheromone.